Consider the following 381-residue polypeptide: Glycerate kinase (381 aa).

It belongs to the glycerate kinase type-1 family.

It catalyses the reaction (R)-glycerate + ATP = (2R)-3-phosphoglycerate + ADP + H(+). This chain is Glycerate kinase (glxK), found in Bacillus cereus (strain ATCC 10987 / NRS 248).